The primary structure comprises 229 residues: PKHD-type hydroxylase BBta_1313 (229 aa).

A Fe2OG dioxygenase domain is found at 78–180 (HIFPPLFNRY…RIASFFWLQS (103 aa)). Fe cation is bound by residues H98, D100, and H161. 2-oxoglutarate is bound at residue R171.

Fe(2+) serves as cofactor. Requires L-ascorbate as cofactor.

This Bradyrhizobium sp. (strain BTAi1 / ATCC BAA-1182) protein is PKHD-type hydroxylase BBta_1313.